Here is a 332-residue protein sequence, read N- to C-terminus: Glyceraldehyde-3-phosphate dehydrogenase (332 aa).

NAD(+) is bound by residues 10-11 (RI), Asp-32, and Met-77. Residues 148–150 (SCT), Thr-179, 208–209 (TG), and Arg-231 each bind D-glyceraldehyde 3-phosphate. The active-site Nucleophile is Cys-149. Residue Asn-313 participates in NAD(+) binding.

This sequence belongs to the glyceraldehyde-3-phosphate dehydrogenase family. Homotetramer.

The protein resides in the cytoplasm. The enzyme catalyses D-glyceraldehyde 3-phosphate + phosphate + NAD(+) = (2R)-3-phospho-glyceroyl phosphate + NADH + H(+). Its pathway is carbohydrate degradation; glycolysis; pyruvate from D-glyceraldehyde 3-phosphate: step 1/5. This is Glyceraldehyde-3-phosphate dehydrogenase (GPDA) from Phytophthora infestans (Potato late blight agent).